Here is a 93-residue protein sequence, read N- to C-terminus: Small ribosomal subunit protein uS19c (93 aa).

The protein belongs to the universal ribosomal protein uS19 family.

The protein localises to the plastid. It is found in the chloroplast. Protein S19 forms a complex with S13 that binds strongly to the 16S ribosomal RNA. This is Small ribosomal subunit protein uS19c from Stigeoclonium helveticum (Green alga).